The chain runs to 444 residues: Methylenetetrahydrofolate--tRNA-(uracil-5-)-methyltransferase TrmFO (444 aa).

Residue 10 to 15 (GAGLAG) coordinates FAD.

This sequence belongs to the MnmG family. TrmFO subfamily. Requires FAD as cofactor.

The protein resides in the cytoplasm. The enzyme catalyses uridine(54) in tRNA + (6R)-5,10-methylene-5,6,7,8-tetrahydrofolate + NADH + H(+) = 5-methyluridine(54) in tRNA + (6S)-5,6,7,8-tetrahydrofolate + NAD(+). The catalysed reaction is uridine(54) in tRNA + (6R)-5,10-methylene-5,6,7,8-tetrahydrofolate + NADPH + H(+) = 5-methyluridine(54) in tRNA + (6S)-5,6,7,8-tetrahydrofolate + NADP(+). Its function is as follows. Catalyzes the folate-dependent formation of 5-methyl-uridine at position 54 (M-5-U54) in all tRNAs. This Streptococcus pneumoniae serotype 4 (strain ATCC BAA-334 / TIGR4) protein is Methylenetetrahydrofolate--tRNA-(uracil-5-)-methyltransferase TrmFO.